A 348-amino-acid chain; its full sequence is Protein arginine N-methyltransferase 1 (348 aa).

An SAM-dependent MTase PRMT-type domain is found at 24–342 (KDYYFDSYAH…KGEVCDLNEQ (319 aa)). The S-adenosyl-L-methionine site is built by His-37, Arg-46, Gly-70, Glu-92, and Glu-121. Residues Glu-139 and Glu-148 contribute to the active site.

The protein belongs to the class I-like SAM-binding methyltransferase superfamily. Protein arginine N-methyltransferase family. Interacts with daf-16. Interacts with pgl-1 and pgl-3. Interacts with alg-1. In terms of tissue distribution, widely expressed in pharyngeal, body wall muscle, intestinal and vulval cells.

The protein localises to the cytoplasm. The protein resides in the nucleus. It catalyses the reaction L-arginyl-[protein] + 2 S-adenosyl-L-methionine = N(omega),N(omega)-dimethyl-L-arginyl-[protein] + 2 S-adenosyl-L-homocysteine + 2 H(+). The enzyme catalyses L-arginyl-[protein] + S-adenosyl-L-methionine = N(omega)-methyl-L-arginyl-[protein] + S-adenosyl-L-homocysteine + H(+). In terms of biological role, arginine methyltransferase that methylates (mono and asymmetric dimethylation) the guanidino nitrogens of arginyl residues present in target proteins. Catalyzes the formation of monomethylarginine and asymmetric dimethylarginine on histones H2A and H4, a specific tag for epigenetic transcriptional activation. Catalyzes asymmetric arginine dimethylation of mitochondrial proteins necessary for mitochondrial oxidative phosphorylation activity and thus aerobic respiration and ATP synthesis, and the mitochondrial stress response. Methylates arginine residues in P-granule components pgl-1 and pgl-3 to promote P-granule degradation by autophagy in somatic cells to ensure exclusive localization of the P-granules in germ cells. Modulates the interaction of P-granule proteins epg-2 and sepa-1. Methylates arginine residues in daf-16, which blocks ftt-2 binding to daf-16, prevents akt-mediated phosphorylation and allows for daf-16 to translocate to the nucleus. In turn, association with daf-16 therefore allows for the transcriptional activation of daf-16 and regulation of longevity-related genes. Maintains lifespan by modulating daf-16 activity downstream of the daf-2 signaling pathway. Plays a role in heat and oxidative stress resistance. Role in stress resistance and also fat storage may be in association with the daf-2 signaling pathway. Required for normal feeding behavior. This Caenorhabditis elegans protein is Protein arginine N-methyltransferase 1.